The following is a 568-amino-acid chain: Glucose-6-phosphate isomerase, cytosolic 1 (568 aa).

The active-site Proton donor is the Glu360. Residues His391 and Lys516 contribute to the active site.

It belongs to the GPI family. In terms of assembly, homodimer.

It localises to the cytoplasm. It carries out the reaction alpha-D-glucose 6-phosphate = beta-D-fructose 6-phosphate. Its pathway is carbohydrate degradation; glycolysis; D-glyceraldehyde 3-phosphate and glycerone phosphate from D-glucose: step 2/4. This chain is Glucose-6-phosphate isomerase, cytosolic 1 (PGIC1), found in Clarkia williamsonii.